Here is a 342-residue protein sequence, read N- to C-terminus: Ribosomal RNA small subunit methyltransferase H (342 aa).

Residues 42-44 (GGH), D61, F88, D119, and Q126 each bind S-adenosyl-L-methionine.

It belongs to the methyltransferase superfamily. RsmH family.

It localises to the cytoplasm. The catalysed reaction is cytidine(1402) in 16S rRNA + S-adenosyl-L-methionine = N(4)-methylcytidine(1402) in 16S rRNA + S-adenosyl-L-homocysteine + H(+). Specifically methylates the N4 position of cytidine in position 1402 (C1402) of 16S rRNA. In Corynebacterium jeikeium (strain K411), this protein is Ribosomal RNA small subunit methyltransferase H.